A 163-amino-acid polypeptide reads, in one-letter code: Fatty acid-binding protein homolog (163 aa).

An N-terminal signal peptide occupies residues 1-23 (MRCLVALILTVLIVTPEVEAKTL).

Belongs to the calycin superfamily. Fatty-acid binding protein (FABP) family. As to expression, abundant in the fluid surrounding the developing embryo of Ascaris suum.

In terms of biological role, may play a role in sequestering potentially toxic fatty acids and their peroxidation products, or it may be involved in the maintenance of the impermeable lipid layer of the eggshell. This Ascaris suum (Pig roundworm) protein is Fatty acid-binding protein homolog.